Here is a 364-residue protein sequence, read N- to C-terminus: Aminomethyltransferase (364 aa).

It belongs to the GcvT family. As to quaternary structure, the glycine cleavage system is composed of four proteins: P, T, L and H.

It carries out the reaction N(6)-[(R)-S(8)-aminomethyldihydrolipoyl]-L-lysyl-[protein] + (6S)-5,6,7,8-tetrahydrofolate = N(6)-[(R)-dihydrolipoyl]-L-lysyl-[protein] + (6R)-5,10-methylene-5,6,7,8-tetrahydrofolate + NH4(+). Functionally, the glycine cleavage system catalyzes the degradation of glycine. In Salmonella paratyphi C (strain RKS4594), this protein is Aminomethyltransferase.